The chain runs to 360 residues: Protein-glutamate methylesterase/protein-glutamine glutaminase 3 (360 aa).

The Response regulatory domain maps to 14 to 131 (RVLVIDDSAT…AEGVQAYAEE (118 aa)). At aspartate 65 the chain carries 4-aspartylphosphate. A CheB-type methylesterase domain is found at 169–360 (AGKDGRVVAV…AGKLMELDGA (192 aa)). Residues serine 181, histidine 207, and aspartate 303 contribute to the active site.

The protein belongs to the CheB family. In terms of processing, phosphorylated by CheA. Phosphorylation of the N-terminal regulatory domain activates the methylesterase activity.

The protein resides in the cytoplasm. It carries out the reaction [protein]-L-glutamate 5-O-methyl ester + H2O = L-glutamyl-[protein] + methanol + H(+). The catalysed reaction is L-glutaminyl-[protein] + H2O = L-glutamyl-[protein] + NH4(+). Functionally, involved in chemotaxis. Part of a chemotaxis signal transduction system that modulates chemotaxis in response to various stimuli. Catalyzes the demethylation of specific methylglutamate residues introduced into the chemoreceptors (methyl-accepting chemotaxis proteins or MCP) by CheR. Also mediates the irreversible deamidation of specific glutamine residues to glutamic acid. The protein is Protein-glutamate methylesterase/protein-glutamine glutaminase 3 of Burkholderia thailandensis (strain ATCC 700388 / DSM 13276 / CCUG 48851 / CIP 106301 / E264).